The primary structure comprises 623 residues: NADPH-dependent diflavin oxidoreductase 1 (623 aa).

The Flavodoxin-like domain occupies 7–168 (IVILYGSETG…VYFEYEKKVL (162 aa)). Residues 13–18 (SETGNA), 60–63 (STTG), 106–115 (LGDSSYPKFN), and Asp142 each bind FMN. The FAD-binding FR-type domain occupies 224–491 (ESLKVGRVNI…VGPGVGLAPL (268 aa)). FAD contacts are provided by residues Arg383, 413–416 (RYYS), and 445–448 (GICT). 538–539 (SR) is a binding site for NADP(+). Trp623 serves as a coordination point for FAD.

It belongs to the NADPH-dependent diflavin oxidoreductase NDOR1 family. In the N-terminal section; belongs to the flavodoxin family. The protein in the C-terminal section; belongs to the flavoprotein pyridine nucleotide cytochrome reductase family. In terms of assembly, interacts with DRE2; as part of the cytosolic iron-sulfur (Fe-S) protein assembly (CIA) machinery. The cofactor is FAD. Requires FMN as cofactor.

The protein localises to the cytoplasm. It localises to the mitochondrion. It catalyses the reaction 2 oxidized [2Fe-2S]-[protein] + NADPH = 2 reduced [2Fe-2S]-[protein] + NADP(+) + H(+). Functionally, NADPH-dependent reductase which is a central component of the cytosolic iron-sulfur (Fe-S) protein assembly (CIA) machinery. Transfers electrons from NADPH via its FAD and FMN prosthetic groups to the [2Fe-2S] cluster of DRE2, another key component of the CIA machinery. In turn, this reduced cluster provides electrons for assembly of cytosolic iron-sulfur cluster proteins. Positively controls H(2)O(2)-induced cell death. This Saccharomyces cerevisiae (strain ATCC 204508 / S288c) (Baker's yeast) protein is NADPH-dependent diflavin oxidoreductase 1.